The chain runs to 145 residues: Hemoglobin subunit beta-A (145 aa).

The Globin domain maps to 1–145 (MLTAEEKAAV…VANALAHRYH (145 aa)). Positions 62 and 91 each coordinate heme b.

It belongs to the globin family. In terms of assembly, heterotetramer of two alpha chains and two beta chains. Red blood cells.

In terms of biological role, involved in oxygen transport from the lung to the various peripheral tissues. This Capra hircus (Goat) protein is Hemoglobin subunit beta-A.